The primary structure comprises 384 residues: Putative glutamate--cysteine ligase 2 (384 aa).

The protein belongs to the glutamate--cysteine ligase type 2 family. YbdK subfamily.

It carries out the reaction L-cysteine + L-glutamate + ATP = gamma-L-glutamyl-L-cysteine + ADP + phosphate + H(+). ATP-dependent carboxylate-amine ligase which exhibits weak glutamate--cysteine ligase activity. The chain is Putative glutamate--cysteine ligase 2 from Ruegeria pomeroyi (strain ATCC 700808 / DSM 15171 / DSS-3) (Silicibacter pomeroyi).